The following is a 274-amino-acid chain: Adenosylcobinamide-GDP ribazoletransferase (274 aa).

7 consecutive transmembrane segments (helical) span residues 46–66 (VMAS…AIAF), 69–89 (TSLG…WELF), 117–137 (IIAD…SILI), 151–173 (WWMV…HSRL), 192–212 (HTII…PLAM), 216–236 (ELIT…LVEI), and 253–273 (FIMH…VGIV).

Belongs to the CobS family. It depends on Mg(2+) as a cofactor.

It localises to the cell membrane. The catalysed reaction is alpha-ribazole + adenosylcob(III)inamide-GDP = adenosylcob(III)alamin + GMP + H(+). The enzyme catalyses alpha-ribazole 5'-phosphate + adenosylcob(III)inamide-GDP = adenosylcob(III)alamin 5'-phosphate + GMP + H(+). The protein operates within cofactor biosynthesis; adenosylcobalamin biosynthesis; adenosylcobalamin from cob(II)yrinate a,c-diamide: step 7/7. Functionally, joins adenosylcobinamide-GDP and alpha-ribazole to generate adenosylcobalamin (Ado-cobalamin). Also synthesizes adenosylcobalamin 5'-phosphate from adenosylcobinamide-GDP and alpha-ribazole 5'-phosphate. The protein is Adenosylcobinamide-GDP ribazoletransferase of Corynebacterium diphtheriae (strain ATCC 700971 / NCTC 13129 / Biotype gravis).